A 446-amino-acid polypeptide reads, in one-letter code: Phosphoglucosamine mutase (446 aa).

S100 acts as the Phosphoserine intermediate in catalysis. S100, D241, D243, and D245 together coordinate Mg(2+). S100 is subject to Phosphoserine.

This sequence belongs to the phosphohexose mutase family. Mg(2+) is required as a cofactor. Activated by phosphorylation.

It catalyses the reaction alpha-D-glucosamine 1-phosphate = D-glucosamine 6-phosphate. In terms of biological role, catalyzes the conversion of glucosamine-6-phosphate to glucosamine-1-phosphate. The sequence is that of Phosphoglucosamine mutase from Methylorubrum extorquens (strain CM4 / NCIMB 13688) (Methylobacterium extorquens).